Reading from the N-terminus, the 4963-residue chain is MPFKQPLGERDAANRVAPTFIRPLADKRAVVGETIILECQLEGHPDPAIKWLKDGHNVSMCPDYRIEEDGLKHRLVIPQVQAADSGRFTAQASNSAGTKQSTCILICAPAPTPVPGAKSAVASPAPPQTPVGPSAPIFLKELRHQPLKPGAGVTFEGRVIAVPPPNIEWMKNGKPLQNYRAKIEHDQKTGIISLIIPQMFNDDAGEYTIKATNVHGEAISGAQLLPREQYDRWFSNEQTRLTKDRKQGLLSQTLRPSSVAQKQMQKQGYDTDQGSVDMHWTISESETEPELSALDARGVGTKPIIRTPLRGLRLTEGTDAILQANIVGNPKPRIQWLFNGRPLQVSGPRMQMTYKGSMAVLKISMVTTEEAGDYTVASENRFGKVESSARIEVYPLSVPDERRKENQLREQQERDRQQQQQALVEASLARERQRDAENRRIREEQDRLRVLFEREKAERERLEEERRQLEHEKRLRQQQQQQLFEREKSEKEERARLEEERRRLEHEKHLRQQQQTQPYNLHYQQHHQPHQAWQDLDLVRRPQYASDEYQEPHYAQIRPHQQQQQHYQQQQQSPRQEVTHQNLYEQHRRQQQLIREQQLYQHQHQQHQQQQQQPQEQQQQRFHHFNQYQQHIREQHQNTMPVFRQQQPTQVTNGGIKAANGSAKTANGSANGSANGSAVHAANGGPSSQQARGHEHGAALVNARPPQFLVHPQSVAAKAFETVTFSAKVVGTPTPSLTWQKSDGTVIQSGGKYKIENGPDGSGRLIIEKVDAHDADMYMLVARNDGGSFQSRFSLNVLQAKSPEAPEFTGKFQSTTLYDGDSVKLYCKAAGEGVSFKWFKDNEPISSGGSYAVDNKGNETTLHINNATMKEGGWYRCDATNKHGTTTLKGRVVVNSRQKFNGPAHREMITLRKVDKVERSRTPVNQLQDVSASKSSPKFEGSLQSQQLVEGQSARLEIKYTPVEDPNLRIAWLLNGKGILASSRIVTFTDFGIAALEINPVNVFDQGEYTVVAVNPLGEARVSANIAVIGHGSFIQQQQSGSQFGGTAYQSKGAQAPAGTHLDLPNFHSDLRSQEVFEGQQIHLETKLTPINDPDLRVVWLLDGNELPSNDKYRQTLSHGFASLDIPQTSSNDSGLYSCRAFNKLGESENQATIIIVPKSDLQQFEQHRQLDVEDVREIQFAHSSQDLTPKFLSQIQPFHCEQELGRSFFEARIQPINDPTLRVSWLKDGQPLPNANRIQIFQNFGVVSLSLHPTYPEDAGVYTCVLFNSHGQAQSSAELTTVWIDTLQLDSKHADSLPIIGYLDSHQIHIGPQSVERPEEFNSLEAPKFARELAGKIEVMENERVHFEARILPANDVKMTVEWYHNGNPLPAAHRFHPMFDFGYVALDLLYAYPQDSGTYTLVARNELGEARSNVELVVGTEKVLYLEPHHPEGLERIKELEQDRRQGIAEVEDRTCDAAPKFLNDLPDIQLNEHENIHVDLRATPVNDPTMVIEWFVNGRPLLTGSRVKTLNEFGFIALDIKGAIAEDSGTYSVRASNLLGEAIRQCVITVTPAGQILSDTQHQESLGKINYLENLNKYGRVEIEDKGPQEPPTFVVPLQADLGDVEEGEPIHLECQVNPINDNSLKIIWLRDGQSLPHGHRFRTFYDFGFVSLDILGFYAQDAGTYTCRAENSLGQAETVATIRCAPKDAILGAVQHPRSYARIQEIEAPKPAPQEVPDLPHQPPAFVKQLGPAIQCMEGDNVYLEAQVTPTDDNSLTYEWLVNGQPLMKAHRFVLSQDFGYIALNILYCYPEDNGTYTLVVRNRAGEAQSTVDINCGHTGGNFTDSFHPNSLHRIAELETPIQRAEPLPDKEKEVPTIAKPLPATIDSVHESQTLHLEAQVTPIDDNTLRYEWLFNGNPLKASSRYRVLNDFGFVSLDIDYIIAEDSGKYTLVVYNSAGRAETSCEFQVDRLKSILSDTAHPESLRRIREMEQLQPAKPSDDDAAAQPPVFTQQLTGPTEPLKEGQSVHMDCVVQPINDPSLRIEWFHDGRPLMFGSRIRTIHDFGYVGLEFLHIHPEDTGTYTCKATNLIGEATTDIFLECKPRRNIYLDTHHESSWQKIQEIENRVDEREPTPELTFQPPTFTENLADKEDAQEGQSIRLECRLIPVNDPTMRVTWTRNGQPLPEASRFMPARNFDYVNLDILALYGEDSGVYTCKAVSAFGEAATSCTVKCAAGKSLLLDTMHDASWKRVQEIENREKLEAVDAEPEKTAPKFVTQLNSSLGELQEGVPIHLEAQVEPTNDNQLTVQWFHNGQPLANGHRFRTRHDFGYVALDILYAFAQDTGEWACVARNSLGEAQTIANFTVLPRGTIYTDSQHPESWQKIQVLEAPRAAAPEKPDAEHDAPQFIEPLDSIDRMEFQSAHFQTKVTPQTDPNLRIQWFKDGQPLMNSNRFKLTTDFGYISLDIAHTVPEDSGVYSVKASNAKGDAEVQAQLTVTGNAVILGDTQHEQSWQKIQLIEAPRAPGEEEPDVKHGPPKFVTQLHSLDGVVEGQPSHFEAQFIPFSDPKTSVQWYLNGNPLSASSRRILRNDFGLVSLDLQYTLGEDAGEYSVVVKNSEGEDRTSGQLSCTTRAAILGDTQHEQSWQRIQEIEAPRAPGAEPEGPVYEKPSFVQPLQSVGDLPEGSVALLEARLVPVNDPNLRVQWFYNDQPLMESNWISTSNDFGCVSLRIAPVYARHTGVYSCKAWNDSGNAVTSANVGVQGSEGLLLDTSHPASLQKIQELEAIDKYARLDAPEREYEKPQWVQGFENYENVGEGQTVTLHGLVEPSGDPHLRLEWLLNGTPLRNANRFRQEYEFGNAILTIVHVLPHDSGVYTCRAWNTQGEASTSATVTTAGYEKILYDSQHPVSWERIQELEAPKIVEEIEEIVQKEKPNFLTQLESAENVPEGVPLHLESTFQPARDPELKVVWQKNGQPLGASQLVQTKHELGWATLDISSANEDHNGVYTLTITNSEGEAVSTASIRVAGTGPILGNTRHEESWKRIQILEAPKEAEPEAPAPVYDHPAITTQIDDKECNEGDHVHFEALITPVNDPRLQVQWIRNGVPLAHGSKYAIQQDFGICTLDVAYTYPEDEGVYQLRIWNPEGEAVSSATLKCHGKDAILGDVQHQESWKRIQEIEAPKQKLEEADPEPKGPPRFIQQLTSPGSLVENQPAHFEATVEPVDDPTLTINWFLNGEPMSASSRVKMINDFGWVIMDIAQTEPRDSGEWKCVAKNAAGEAVSTATIEVQGKEVILQDSLQPQSLDRIRQIEAGKPAPEERPDQQFEAPAIVNALQVQGALEEGGSAHLQTQFTPVADPSIKVEWLKDGQPIFHSNRYKMVHDFGFAVLDILHLLKHDAGEYTFRVSNNSGEASTSTSFEVSESSGLILQPQNEQKAKAVEILEDNLRRRPEEIEQELKEATPVFIEPLSAPVETEEGGRAHFTARYEPVNDNQLQVQWYHDGRPLKNGSRIKTINSFGYVVLEISPTYPEDNGEYICRAVNRVGEAVTSTKLTCTPKEGIISATQLPERMANAGRRIAEIEAPRPAREDAPDADHGPPKFTSALAGPPELQEGQQAHLECQVTPVADPRLVIEWFHNGQPVNHTNRMKAIHDFGFVVLQLTPAEPQDSGTWTCRATNQHGSDEVSTELKVVGGGGVSYEWQSTAERKERITELEDWIHRPKEDLNLPAVDYPAPSFSQGLTDLGQLNEADATAFVCVLEPIGDPTLRVQWEHNGHPIPYSNRISCTNEFGVATLLIKHLIAADAGEYKCVATNVKGSATSVGKIAVESSTQIDAPQVVQQLVDSVENILEGDSIHLECRVTPINDPRLHVEWLRNGAPLPEASRFKPTFEFGFVSLDILYAYPEDNGDYELVVRNDKGEARSKTKITVLPRPSLDYTSQTHGNQQDSLESHFKQHSQAKLQLTANDIYNESDKRAPEFRTQLQNIGVLEGEFCRFETQVAPINDPYLKVEWFKDKKPVLLGHRFRSTLDFGFACLDLLYALPDDTGEYHCVATNRHGQTMISAKLACQGASHVITDSQMPQGLRVSNVKKDNKNIYWSEQGGAVQPKQKQAPQFTIPLRNLQVTENQPARFECAVTGYPRPKVTWFINGNQCLHGHRFKLNFDGLHYLTVSKSRISDAGEVVAIARNTEGETISTATLDIFQNDDFRQTKLRPANFKTSDELRERELQWQRDTLGSLGPAFEAAPKPDAQKLMHVERAQSPIEPMESQELIQKFTRPRDDNFYNKLSYVELQKPQFKGMELEEVNLKAGKVEKYQPPVEEMERVNLKAIPEKDQQEVGWERPDWAGQDGTSKLPGADEGRFKKLPTPAPELDVPARDQVKLKTAKPTRGKDLEAGEKVKLKTEKAKIKEIQQKPEQPKEEPIVHKDAVQLKTQQLPKTGIKGDHFTVDREKDLKETPAVVKPVIEETRISNKSISNVVHESSEYTSSYASNQSRLTYQAYREHKESTSSDVYLSVETADSFSQVQRLEYSPRSPRRERIIGFHMIRPQPTKIGQSKQAPPTISQQLKPLQGELGKAAKFVIEFAGAAPVKVTWLKDGKEIKSTFRTLITTTPTNSSLHIGRLENSHAGEYTVRLENAAGTVESLANLTVAPPTTQGKAPDFSARLNDLRIQQNGPAEFSCQIGGEPKPTIQWFKDGQPLPNDDRFQVVEEGGAYKLKFSNIISTDAGIYEIVAKNGVGEARCKARLNVNLQKTGKGAEEGPRYEAPRFTSQIQPIVVDEGKGAQFSAQFSGFPDPTIRWYRNNEPVKHADGYEISQSKGEAILRISAARNEDVAEYKVEASNPAGKASSVANLVLTPRSGRIAKSTISRGGSASYQSSDKAAADSPHFIAKLSDISARQGHTVKFSAEVDGNPEPTVQWQFKGKPISASNNVKISRDGKRAILELARVTPDSAGEYQIVIRNDKGAATSQAKLTLSR.

3 consecutive Ig-like domains span residues 18–105 (PTFI…TCIL), 133–220 (PSAP…EAIS), and 303–392 (PIIR…ARIE). 5 disordered regions span residues 396–420 (LSVPDERRKENQLREQQERDRQQQQ), 466–501 (RRQLEHEKRLRQQQQQQLFEREKSEKEERARLEEER), 557–578 (IRPHQQQQQHYQQQQQSPRQEV), 598–622 (QLYQHQHQQHQQQQQQPQEQQQQRF), and 652–696 (TNGG…GHEH). Basic and acidic residues-rich tracts occupy residues 399–417 (PDERRKENQLREQQERDRQ), 466–475 (RRQLEHEKRL), and 484–501 (FEREKSEKEERARLEEER). Residues 401 to 517 (ERRKENQLRE…KHLRQQQQTQ (117 aa)) adopt a coiled-coil conformation. The segment covering 557–576 (IRPHQQQQQHYQQQQQSPRQ) has biased composition (low complexity). Residues 658–685 (AANGSAKTANGSANGSANGSAVHAANGG) are compositionally biased toward low complexity. 20 consecutive Ig-like domains span residues 706–796 (PQFL…FSLN), 806–893 (PEFT…GRVV), 937–1027 (PKFE…ANIA), 1065–1155 (PNFH…ATII), 1199–1281 (FHCE…AELT), 1462–1554 (PKFL…ITVT), 1594–1687 (PPTF…ATIR), 1728–1819 (PAFV…VDIN), 1992–2085 (PPVF…IFLE), 2126–2217 (PTFT…CTVK), 2258–2350 (PKFV…ANFT), 2391–2481 (PQFI…AQLT), 2522–2613 (PKFV…GQLS), 2654–2745 (PSFV…ANVG), 2787–2878 (PQWV…ATVT), 2919–3010 (PNFL…ASIR), 3051–3141 (PAIT…ATLK), 3182–3273 (PRFI…ATIE), 3314–3407 (PAIV…FEVS), and 3448–3539 (PVFI…TKLT). Cysteines 827 and 877 form a disulfide. Residues Cys1201 and Cys1265 are joined by a disulfide bond. Residues Cys1618 and Cys1671 are joined by a disulfide bond. 2 disulfides stabilise this stretch: Cys2016–Cys2069 and Cys2148–Cys2201. The segment covering 3567 to 3583 (EAPRPAREDAPDADHGP) has biased composition (basic and acidic residues). Residues 3567-3590 (EAPRPAREDAPDADHGPPKFTSAL) form a disordered region. 5 Ig-like domains span residues 3584-3677 (PKFT…LKVV), 3720-3811 (PSFS…GKIA), 3821-3913 (PQVV…TKIT), 3962-4052 (PEFR…AKLA), and 4098-4185 (PQFT…ATLD). 2 disulfide bridges follow: Cys3606-Cys3659 and Cys3742-Cys3795. Residues 4193–4963 (RQTKLRPANF…TSQAKLTLSR (771 aa)) are required for F-actin binding. Over residues 4319 to 4329 (DQQEVGWERPD) the composition is skewed to basic and acidic residues. The segment at 4319–4357 (DQQEVGWERPDWAGQDGTSKLPGADEGRFKKLPTPAPEL) is disordered. Ig-like domains lie at 4546 to 4634 (PTIS…ANLT), 4645 to 4733 (PDFS…ARLN), 4752 to 4842 (PRFT…LVLT), and 4872 to 4960 (PHFI…AKLT).

As to quaternary structure, interacts (via Ig-like domains) with F-actin. Expressed in the pharyngeal, body wall, and anal depressor muscles. Expression in these muscles is higher in hermaphrodites than in males. Expressed in the vulva and the myoepithelial sheath of the proximal ovary. Expressed in the proximal gonad of males. Not expressed in the dense bodies of the obliquely striated body wall muscle.

The protein resides in the cytoplasm. It is found in the myofibril. It localises to the sarcomere. The protein localises to the cytoskeleton. Positively regulates actin filament organization and provides mechanical stability to the myofibrils during body wall muscle contraction. Required for the organization of sarcomeric actin filaments and myosin protein myo-3 in striated body wall muscle cells. Not required for assembly of dense bodies, which are a type of integrin-based adhesion structure that link the plasma membrane to thin filaments of myofibrils, in body wall muscle. Not required for the atn-1 protein to localize to the dense bodies. The chain is Kettin homolog from Caenorhabditis elegans.